Reading from the N-terminus, the 366-residue chain is Tudor domain-containing protein 10 (366 aa).

An RRM domain is found at 34–107 (TEVYVGNLPL…RKLFVNTSKR (74 aa)). A Tudor domain is found at 210 to 317 (FWAMHVTEAL…PLTQPFMLEK (108 aa)). A coiled-coil region spans residues 216-237 (TEALHQNMQALFSTLAQAEEQQ).

In Homo sapiens (Human), this protein is Tudor domain-containing protein 10 (TDRD10).